The sequence spans 234 residues: Carboxy-S-adenosyl-L-methionine synthase (234 aa).

S-adenosyl-L-methionine-binding positions include Y35, 60–62 (GSS), 83–84 (DN), N124, and R191.

It belongs to the class I-like SAM-binding methyltransferase superfamily. Cx-SAM synthase family. As to quaternary structure, homodimer.

The enzyme catalyses prephenate + S-adenosyl-L-methionine = carboxy-S-adenosyl-L-methionine + 3-phenylpyruvate + H2O. Functionally, catalyzes the conversion of S-adenosyl-L-methionine (SAM) to carboxy-S-adenosyl-L-methionine (Cx-SAM). This Nautilia profundicola (strain ATCC BAA-1463 / DSM 18972 / AmH) protein is Carboxy-S-adenosyl-L-methionine synthase.